A 126-amino-acid polypeptide reads, in one-letter code: Fluoride-specific ion channel FluC 3 (126 aa).

Transmembrane regions (helical) follow at residues 7–27, 37–57, 68–87, and 101–121; these read MWVGLGGGIGSLLRWWIGLSI, LGTFLINISGAFVIGYLSILF, LMNTAVLTGILGGYTTFSSM, and AIAAGYLIISVLVGLAAAAFG. Na(+)-binding residues include Gly79 and Thr82.

The protein belongs to the fluoride channel Fluc/FEX (TC 1.A.43) family.

The protein localises to the cell inner membrane. The catalysed reaction is fluoride(in) = fluoride(out). Its activity is regulated as follows. Na(+) is not transported, but it plays an essential structural role and its presence is essential for fluoride channel function. Functionally, fluoride-specific ion channel. Important for reducing fluoride concentration in the cell, thus reducing its toxicity. This chain is Fluoride-specific ion channel FluC 3, found in Yersinia pestis.